The sequence spans 640 residues: Threonine--tRNA ligase (640 aa).

Residues 1–61 (MPIIALPDGN…EKDSEVNIIT (61 aa)) form the TGS domain. Positions 242–533 (DHRRIAKQMS…LIEHYAGRLP (292 aa)) are catalytic. Positions 333, 384, and 510 each coordinate Zn(2+).

It belongs to the class-II aminoacyl-tRNA synthetase family. As to quaternary structure, homodimer. It depends on Zn(2+) as a cofactor.

It is found in the cytoplasm. The enzyme catalyses tRNA(Thr) + L-threonine + ATP = L-threonyl-tRNA(Thr) + AMP + diphosphate + H(+). Functionally, catalyzes the attachment of threonine to tRNA(Thr) in a two-step reaction: L-threonine is first activated by ATP to form Thr-AMP and then transferred to the acceptor end of tRNA(Thr). Also edits incorrectly charged L-seryl-tRNA(Thr). The protein is Threonine--tRNA ligase of Prochlorococcus marinus (strain MIT 9313).